A 337-amino-acid polypeptide reads, in one-letter code: Putative 4-hydroxythreonine-4-phosphate dehydrogenase (337 aa).

3 residues coordinate a divalent metal cation: H172, H216, and H271.

This sequence belongs to the PdxA family. As to quaternary structure, homodimer. It depends on Zn(2+) as a cofactor. The cofactor is Mg(2+). Requires Co(2+) as cofactor.

It is found in the cytoplasm. The enzyme catalyses 4-(phosphooxy)-L-threonine + NAD(+) = 3-amino-2-oxopropyl phosphate + CO2 + NADH. Its pathway is cofactor biosynthesis; pyridoxine 5'-phosphate biosynthesis; pyridoxine 5'-phosphate from D-erythrose 4-phosphate: step 4/5. Functionally, catalyzes the NAD(P)-dependent oxidation of 4-(phosphooxy)-L-threonine (HTP) into 2-amino-3-oxo-4-(phosphooxy)butyric acid which spontaneously decarboxylates to form 3-amino-2-oxopropyl phosphate (AHAP). The polypeptide is Putative 4-hydroxythreonine-4-phosphate dehydrogenase (Pasteurella multocida (strain Pm70)).